Reading from the N-terminus, the 256-residue chain is Ubiquinone/menaquinone biosynthesis C-methyltransferase UbiE (256 aa).

Over residues 1-12 the composition is skewed to basic and acidic residues; sequence MTDPRKGDHAEP. Residues 1–21 form a disordered region; sequence MTDPRKGDHAEPTTHFGYQDV. Residues Thr79, Asp100, and 128–129 each bind S-adenosyl-L-methionine; that span reads DA.

This sequence belongs to the class I-like SAM-binding methyltransferase superfamily. MenG/UbiE family.

The catalysed reaction is a 2-demethylmenaquinol + S-adenosyl-L-methionine = a menaquinol + S-adenosyl-L-homocysteine + H(+). It carries out the reaction a 2-methoxy-6-(all-trans-polyprenyl)benzene-1,4-diol + S-adenosyl-L-methionine = a 5-methoxy-2-methyl-3-(all-trans-polyprenyl)benzene-1,4-diol + S-adenosyl-L-homocysteine + H(+). It participates in quinol/quinone metabolism; menaquinone biosynthesis; menaquinol from 1,4-dihydroxy-2-naphthoate: step 2/2. It functions in the pathway cofactor biosynthesis; ubiquinone biosynthesis. Its function is as follows. Methyltransferase required for the conversion of demethylmenaquinol (DMKH2) to menaquinol (MKH2) and the conversion of 2-polyprenyl-6-methoxy-1,4-benzoquinol (DDMQH2) to 2-polyprenyl-3-methyl-6-methoxy-1,4-benzoquinol (DMQH2). The chain is Ubiquinone/menaquinone biosynthesis C-methyltransferase UbiE from Pseudomonas entomophila (strain L48).